A 281-amino-acid chain; its full sequence is Pantothenate synthetase (281 aa).

30–37 (MGALHAGH) contributes to the ATP binding site. The Proton donor role is filled by His37. Gln64 provides a ligand contact to (R)-pantoate. Gln64 lines the beta-alanine pocket. 150–153 (GKKD) lines the ATP pocket. Residue Gln156 participates in (R)-pantoate binding. Residues Val179 and 187–190 (YSSR) contribute to the ATP site.

This sequence belongs to the pantothenate synthetase family. As to quaternary structure, homodimer.

The protein localises to the cytoplasm. It catalyses the reaction (R)-pantoate + beta-alanine + ATP = (R)-pantothenate + AMP + diphosphate + H(+). Its pathway is cofactor biosynthesis; (R)-pantothenate biosynthesis; (R)-pantothenate from (R)-pantoate and beta-alanine: step 1/1. Functionally, catalyzes the condensation of pantoate with beta-alanine in an ATP-dependent reaction via a pantoyl-adenylate intermediate. The sequence is that of Pantothenate synthetase from Akkermansia muciniphila (strain ATCC BAA-835 / DSM 22959 / JCM 33894 / BCRC 81048 / CCUG 64013 / CIP 107961 / Muc).